A 372-amino-acid polypeptide reads, in one-letter code: Putative isochorismate synthase MenF (372 aa).

K119 acts as the Proton acceptor in catalysis. Residue E175 is the Proton donor of the active site. The Mg(2+) site is built by E219 and E356.

Belongs to the isochorismate synthase family. Mg(2+) is required as a cofactor.

The catalysed reaction is chorismate = isochorismate. Its pathway is quinol/quinone metabolism; 1,4-dihydroxy-2-naphthoate biosynthesis; 1,4-dihydroxy-2-naphthoate from chorismate: step 1/7. The protein operates within quinol/quinone metabolism; menaquinone biosynthesis. Catalyzes the conversion of chorismate to isochorismate. This Mycobacterium tuberculosis (strain CDC 1551 / Oshkosh) protein is Putative isochorismate synthase MenF (menF).